The primary structure comprises 1744 residues: Complement C4-A (1744 aa).

A signal peptide spans 1–19 (MRLLWGLIWASSFFTLSLQ). Cys68 and Cys97 form a disulfide bridge. An N-linked (GlcNAc...) asparagine glycan is attached at Asn226. The cysteines at positions 635 and 669 are disulfide-linked. The propeptide occupies 676 to 679 (RKKR). 3 disulfide bridges follow: Cys702-Cys728, Cys703-Cys735, and Cys716-Cys736. The 35-residue stretch at 702 to 736 (CCQDGVTRLPMMRSCEQRAARVQQPDCREPFLSCC) folds into the Anaphylatoxin-like domain. Asn862 is a glycosylation site (N-linked (GlcNAc...) asparagine). Ser918 bears the Phosphoserine; by FAM20C mark. The segment at residues 1010–1013 (CGEQ) is a cross-link (isoglutamyl cysteine thioester (Cys-Gln)). O-linked (GalNAc...) threonine glycosylation occurs at Thr1244. Residue Asn1328 is glycosylated (N-linked (GlcNAc...) (complex) asparagine). Asn1391 carries N-linked (GlcNAc...) asparagine glycosylation. A sulfotyrosine mark is found at Tyr1417, Tyr1420, and Tyr1422. The propeptide occupies 1447 to 1453 (RRNRRRR). Cystine bridges form between Cys1471-Cys1535, Cys1583-Cys1588, Cys1595-Cys1673, Cys1618-Cys1742, and Cys1718-Cys1727. Residues 1595 to 1742 (CPRQRRALER…FLQEYGTQGC (148 aa)) enclose the NTR domain.

As to quaternary structure, complement circulates in blood as a disulfide-linked trimer of an alpha, beta and gamma chain. In terms of assembly, complement C4b is composed of complement C4b-A, complement C4 beta and complement C4 gamma chains that are associated via disulfide bonds. Non-enzymatic component of the C3 convertase, also named C4bC2b, composed of the serine protease complement C2b (C2), as well as complement C4b. Non-enzymatic component of the C5 convertase, also named C4bC2bC3b, composed of the serine protease complement C2b (C2), complement C3b, as well as complement C4b. Post-translationally, prior to secretion, the single-chain precursor is enzymatically cleaved by plasminogen (PLG) to yield non-identical chains alpha, beta and gamma. During activation of the complement systems, the alpha chain is cleaved into C4a and C4b by different proteases depending on the complement pathway: C4b stays linked to the beta and gamma chains, while C4a is released in the plasma. The alpha chain is cleaved by C1S to generate C4a and C4b following activation by the classical complement system. The alpha chain is cleaved to generate C4a and C4b by MASP2 following activation by the lectin complement system. The alpha chain is cleaved by GZMK to generate C4a and C4b following activation by the GZMK complement system. Further degradation of C4b by C1 into the inactive fragments C4c and C4d blocks the generation of C3 convertase. The proteolytic cleavages often are incomplete so that many structural forms can be found in plasma. In terms of processing, upon activation, the internal thioester bond reacts with carbohydrate antigens on the target surface to form amide or ester bonds, leading to covalent association with the surface of pathogens. Ser-1236 of complement C4b interacts with complement C3b via a thioester linkage. Post-translationally, N- and O-glycosylated. O-glycosylated with a core 1 or possibly core 8 glycan. Complement component C4 is expressed at highest levels in the liver, at moderate levels in the adrenal cortex, adrenal medulla, thyroid gland, and the kidney, and at lowest levels in the heart, ovary, small intestine, thymus, pancreas and spleen. The extra-hepatic sites of expression may be important for the local protection and inflammatory response.

It localises to the secreted. It is found in the synapse. The protein resides in the cell projection. Its subcellular location is the axon. The protein localises to the dendrite. It localises to the cell surface. With respect to regulation, specifically inhibited by nanobody hC4Nb8, inhibiting the classical complement pathway. Specifically inhibited by NbB5, NbE11 and NbH9 nanobodies, and to a lesser extent by NbH11 and NbE3 nanobodies. In terms of biological role, precursor of non-enzymatic components of the classical, lectin and GZMK complement pathways, which consist in a cascade of proteins that leads to phagocytosis and breakdown of pathogens and signaling that strengthens the adaptive immune system. Its function is as follows. Non-enzymatic component of C3 and C5 convertases. Generated following cleavage by complement proteases (C1S, MASP2 or GZMK, depending on the complement pathway), it covalently attaches to the surface of pathogens, where it acts as an opsonin that marks the surface of antigens for removal. It then recruits the serine protease complement C2b to form the C3 and C5 convertases, which cleave and activate C3 and C5, respectively, the next components of the complement pathways. Complement C4b-A isotype is responsible for effective binding to form amide bonds with immune aggregates or protein antigens, while complement C4b-B isotype catalyzes the transacylation of the thioester carbonyl group to form ester bonds with carbohydrate antigens. Functionally, putative humoral mediator released following cleavage by complement proteases (C1S, MASP2 or GZMK, depending on the complement pathway). While it is strongly similar to anaphylatoxins, its role is unclear. Was reported to act as a mediator of local inflammatory process; however these effects were probably due to contamination with C3a and/C5a anaphylatoxins in biological assays. This chain is Complement C4-A, found in Homo sapiens (Human).